A 20-amino-acid chain; its full sequence is Unknown protein from 2D-PAGE (20 aa).

This is Unknown protein from 2D-PAGE from Nicotiana tabacum (Common tobacco).